The following is a 437-amino-acid chain: Homogentisate 1,2-dioxygenase (437 aa).

H295 functions as the Proton acceptor in the catalytic mechanism. 2 residues coordinate Fe cation: H338 and E344. 2 residues coordinate homogentisate: Y353 and H374. Position 374 (H374) interacts with Fe cation.

Belongs to the homogentisate dioxygenase family. Hexamer; dimer of trimers. Requires Fe cation as cofactor.

It carries out the reaction homogentisate + O2 = 4-maleylacetoacetate + H(+). Its pathway is amino-acid degradation; L-phenylalanine degradation; acetoacetate and fumarate from L-phenylalanine: step 4/6. In terms of biological role, involved in the catabolism of homogentisate (2,5-dihydroxyphenylacetate or 2,5-OH-PhAc), a central intermediate in the degradation of phenylalanine and tyrosine. Catalyzes the oxidative ring cleavage of the aromatic ring of homogentisate to yield maleylacetoacetate. The chain is Homogentisate 1,2-dioxygenase from Myxococcus xanthus (strain DK1622).